The sequence spans 353 residues: uncharacterized protein (353 aa).

Residues 233–245 (ASCSNNEPSASLE) are compositionally biased toward polar residues. The segment at 233–265 (ASCSNNEPSASLESESRHFSPVNSLSPSSLSTD) is disordered. Over residues 252-263 (SPVNSLSPSSLS) the composition is skewed to low complexity.

This is an uncharacterized protein from Saccharomyces cerevisiae (strain ATCC 204508 / S288c) (Baker's yeast).